A 427-amino-acid polypeptide reads, in one-letter code: Serine--tRNA ligase (427 aa).

Position 231 to 233 (T231 to E233) interacts with L-serine. R262–E264 lines the ATP pocket. E285 serves as a coordination point for L-serine. Residue E349–S352 coordinates ATP. Position 385 (S385) interacts with L-serine.

Belongs to the class-II aminoacyl-tRNA synthetase family. Type-1 seryl-tRNA synthetase subfamily. Homodimer. The tRNA molecule binds across the dimer.

The protein resides in the cytoplasm. The enzyme catalyses tRNA(Ser) + L-serine + ATP = L-seryl-tRNA(Ser) + AMP + diphosphate + H(+). It catalyses the reaction tRNA(Sec) + L-serine + ATP = L-seryl-tRNA(Sec) + AMP + diphosphate + H(+). It participates in aminoacyl-tRNA biosynthesis; selenocysteinyl-tRNA(Sec) biosynthesis; L-seryl-tRNA(Sec) from L-serine and tRNA(Sec): step 1/1. Functionally, catalyzes the attachment of serine to tRNA(Ser). Is also able to aminoacylate tRNA(Sec) with serine, to form the misacylated tRNA L-seryl-tRNA(Sec), which will be further converted into selenocysteinyl-tRNA(Sec). This is Serine--tRNA ligase from Staphylococcus saprophyticus subsp. saprophyticus (strain ATCC 15305 / DSM 20229 / NCIMB 8711 / NCTC 7292 / S-41).